Here is a 743-residue protein sequence, read N- to C-terminus: MLNVVSKTIDLGDGRSIKIETGKLAKQADGAVTVTMGNTVLLATVCAAKDANPGCDFMPLQVEYKEKYSAIGRFPGGFTRREGKASDYEILTCRLVDRALRPLFPDNYHAEVFVNVILFSADGEDMPDALAGLAASAALAVSDIPFNGPISEVRVARVDGRYIVNPTFEQLERADIDLMVGATMDNIMMVEGEMDEVQESEMLEGIRVAHEAIKVQCKAQLELSEAVGKLQKREYSHEVNDEDLRKKVHDECYARAYEVATSGTGKHERGEAFEKIVEEFKAQYTEEELAEKAEMIARYYHDVEKEAMRRAILDEGKRLDGRKTTEIRPIWIETDCLPGPHGSAIFTRGETQSLTTVTLGTKSDEKLVDDVLNYTKERFLLHYNFPPFSTGEARPQRGVGRREIGHGNLAHRALKRMIPTDYPYVVRVISDILESNGSSSMATVCAGTLALRDAGVQIRKPVSGIAMGLISENQGKNYAILSDILGDEDHLGDMDFKVTGTKDGITATQMDIKVDGLSYEILENALEQAKQGRLHILGKIMEAQPETRDDLKPHAPRIEKMHIGKEFIGAVIGPGGKIIQGIQEKSGATVNIEEVDGMGVIEISGTNKPCIDAAIGMIKGIVAMPEVGETYPGKITSVMPYGCFVEFLPGKEGLLHISEVDWKRFETIEDTNLKEGESINVKLLDIDPKTGKFKLSRKVLLEKPEGYVEPQPRERRERREGGREGGRNFERRGGDRDHREPRG.

Mg(2+) is bound by residues Asp-489 and Asp-495. The KH domain occupies 556–618 (PRIEKMHIGK…PCIDAAIGMI (63 aa)). The S1 motif domain maps to 628-698 (GETYPGKITS…KTGKFKLSRK (71 aa)). The tract at residues 704–743 (PEGYVEPQPRERRERREGGREGGRNFERRGGDRDHREPRG) is disordered.

It belongs to the polyribonucleotide nucleotidyltransferase family. The cofactor is Mg(2+).

It is found in the cytoplasm. It catalyses the reaction RNA(n+1) + phosphate = RNA(n) + a ribonucleoside 5'-diphosphate. Functionally, involved in mRNA degradation. Catalyzes the phosphorolysis of single-stranded polyribonucleotides processively in the 3'- to 5'-direction. This chain is Polyribonucleotide nucleotidyltransferase, found in Porphyromonas gingivalis (strain ATCC BAA-308 / W83).